A 450-amino-acid chain; its full sequence is Bifunctional protein GlmU (450 aa).

Residues 1–229 form a pyrophosphorylase region; that stretch reads MRRHAIILAA…VEEIMGVNDR (229 aa). UDP-N-acetyl-alpha-D-glucosamine contacts are provided by residues 8-11, Lys22, Gln72, and 77-78; these read LAAG and GT. Asp102 serves as a coordination point for Mg(2+). Positions 139, 154, and 227 each coordinate UDP-N-acetyl-alpha-D-glucosamine. Mg(2+) is bound at residue Asn227. The interval 230 to 250 is linker; that stretch reads VMLSQAEKAMQRRTNHYHMLN. Positions 251–450 are N-acetyltransferase; sequence GVTIIDPDST…RQTTKEGYRK (200 aa). UDP-N-acetyl-alpha-D-glucosamine contacts are provided by Arg332 and Lys350. The active-site Proton acceptor is His362. The UDP-N-acetyl-alpha-D-glucosamine site is built by Tyr365 and Asn376. Residues 385–386, Ala422, and Arg439 each bind acetyl-CoA; that span reads NY.

In the N-terminal section; belongs to the N-acetylglucosamine-1-phosphate uridyltransferase family. The protein in the C-terminal section; belongs to the transferase hexapeptide repeat family. In terms of assembly, homotrimer. It depends on Mg(2+) as a cofactor.

The protein localises to the cytoplasm. The catalysed reaction is alpha-D-glucosamine 1-phosphate + acetyl-CoA = N-acetyl-alpha-D-glucosamine 1-phosphate + CoA + H(+). It carries out the reaction N-acetyl-alpha-D-glucosamine 1-phosphate + UTP + H(+) = UDP-N-acetyl-alpha-D-glucosamine + diphosphate. It functions in the pathway nucleotide-sugar biosynthesis; UDP-N-acetyl-alpha-D-glucosamine biosynthesis; N-acetyl-alpha-D-glucosamine 1-phosphate from alpha-D-glucosamine 6-phosphate (route II): step 2/2. It participates in nucleotide-sugar biosynthesis; UDP-N-acetyl-alpha-D-glucosamine biosynthesis; UDP-N-acetyl-alpha-D-glucosamine from N-acetyl-alpha-D-glucosamine 1-phosphate: step 1/1. The protein operates within bacterial outer membrane biogenesis; LPS lipid A biosynthesis. In terms of biological role, catalyzes the last two sequential reactions in the de novo biosynthetic pathway for UDP-N-acetylglucosamine (UDP-GlcNAc). The C-terminal domain catalyzes the transfer of acetyl group from acetyl coenzyme A to glucosamine-1-phosphate (GlcN-1-P) to produce N-acetylglucosamine-1-phosphate (GlcNAc-1-P), which is converted into UDP-GlcNAc by the transfer of uridine 5-monophosphate (from uridine 5-triphosphate), a reaction catalyzed by the N-terminal domain. The sequence is that of Bifunctional protein GlmU from Staphylococcus aureus (strain Mu50 / ATCC 700699).